We begin with the raw amino-acid sequence, 109 residues long: Parvalbumin-7 (109 aa).

At Ala2 the chain carries N-acetylalanine. EF-hand domains are found at residues 39–74 and 78–109; these read LSAD…FSAD and LTDK…LVHE. Ca(2+) is bound by residues Asp52, Asp54, Ser56, Phe58, Glu60, Glu63, Asp91, Asp93, Asp95, Lys97, and Glu102.

Belongs to the parvalbumin family.

Its function is as follows. In muscle, parvalbumin is thought to be involved in relaxation after contraction. It binds two calcium ions. In Danio rerio (Zebrafish), this protein is Parvalbumin-7 (pvalb7).